Consider the following 598-residue polypeptide: Aspartate--tRNA(Asp/Asn) ligase (598 aa).

E177 contacts L-aspartate. The tract at residues 201 to 204 is aspartate; sequence QIFK. L-aspartate-binding residues include R223 and H451. An ATP-binding site is contributed by 223–225; it reads RDE. E485 is an ATP binding site. Residue R492 coordinates L-aspartate. 537 to 540 contacts ATP; sequence GVDR.

This sequence belongs to the class-II aminoacyl-tRNA synthetase family. Type 1 subfamily. As to quaternary structure, homodimer.

It localises to the cytoplasm. It catalyses the reaction tRNA(Asx) + L-aspartate + ATP = L-aspartyl-tRNA(Asx) + AMP + diphosphate. Its function is as follows. Aspartyl-tRNA synthetase with relaxed tRNA specificity since it is able to aspartylate not only its cognate tRNA(Asp) but also tRNA(Asn). Reaction proceeds in two steps: L-aspartate is first activated by ATP to form Asp-AMP and then transferred to the acceptor end of tRNA(Asp/Asn). This Anaplasma phagocytophilum (strain HZ) protein is Aspartate--tRNA(Asp/Asn) ligase.